Here is a 183-residue protein sequence, read N- to C-terminus: Beta-defensin 129 (183 aa).

Residues 1-19 (MKLLFPVFASLMLQYQVNT) form the signal peptide. Intrachain disulfides connect cysteine 27/cysteine 53, cysteine 34/cysteine 48, and cysteine 38/cysteine 54. Residues 141 to 183 (TATSTKSNTKESRDSATASPPPAPPPPNILPTPSLELEKAEEQ) form a disordered region. Residues 159–170 (SPPPAPPPPNIL) are compositionally biased toward pro residues.

This sequence belongs to the beta-defensin family.

It localises to the secreted. Functionally, has antibacterial activity. This Pongo pygmaeus (Bornean orangutan) protein is Beta-defensin 129 (DEFB129).